The sequence spans 1001 residues: 2-oxoglutarate dehydrogenase E1 component (1001 aa).

Belongs to the alpha-ketoglutarate dehydrogenase family. As to quaternary structure, homodimer. Part of the 2-oxoglutarate dehydrogenase (OGDH) complex composed of E1 (2-oxoglutarate dehydrogenase), E2 (dihydrolipoamide succinyltransferase) and E3 (dihydrolipoamide dehydrogenase); the complex contains multiple copies of the three enzymatic components (E1, E2 and E3). Requires thiamine diphosphate as cofactor.

It catalyses the reaction N(6)-[(R)-lipoyl]-L-lysyl-[protein] + 2-oxoglutarate + H(+) = N(6)-[(R)-S(8)-succinyldihydrolipoyl]-L-lysyl-[protein] + CO2. Functionally, E1 component of the 2-oxoglutarate dehydrogenase (OGDH) complex which catalyzes the decarboxylation of 2-oxoglutarate, the first step in the conversion of 2-oxoglutarate to succinyl-CoA and CO(2). In Brucella anthropi (strain ATCC 49188 / DSM 6882 / CCUG 24695 / JCM 21032 / LMG 3331 / NBRC 15819 / NCTC 12168 / Alc 37) (Ochrobactrum anthropi), this protein is 2-oxoglutarate dehydrogenase E1 component.